The primary structure comprises 208 residues: NAD(P)H-quinone oxidoreductase subunit I (208 aa).

2 consecutive 4Fe-4S ferredoxin-type domains span residues 55 to 84 (GRIHYEFDKCIACEVCVRVCPINLPVVDWV) and 95 to 124 (RNYSIDFGVCIFCGNCVEYCPTNCLSMTEE). [4Fe-4S] cluster contacts are provided by Cys64, Cys67, Cys70, Cys74, Cys104, Cys107, Cys110, and Cys114.

The protein belongs to the complex I 23 kDa subunit family. In terms of assembly, NDH-1 is composed of at least 11 different subunits. [4Fe-4S] cluster is required as a cofactor.

It is found in the cellular thylakoid membrane. It carries out the reaction a plastoquinone + NADH + (n+1) H(+)(in) = a plastoquinol + NAD(+) + n H(+)(out). The enzyme catalyses a plastoquinone + NADPH + (n+1) H(+)(in) = a plastoquinol + NADP(+) + n H(+)(out). Its function is as follows. NDH-1 shuttles electrons from an unknown electron donor, via FMN and iron-sulfur (Fe-S) centers, to quinones in the respiratory and/or the photosynthetic chain. The immediate electron acceptor for the enzyme in this species is believed to be plastoquinone. Couples the redox reaction to proton translocation, and thus conserves the redox energy in a proton gradient. This Prochlorococcus marinus (strain MIT 9301) protein is NAD(P)H-quinone oxidoreductase subunit I.